The following is a 308-amino-acid chain: tRNA uridine(34) hydroxylase (308 aa).

One can recognise a Rhodanese domain in the interval 129–223 (QEKDTLILDA…YGKHPETQGA (95 aa)). C183 serves as the catalytic Cysteine persulfide intermediate.

Belongs to the TrhO family.

It catalyses the reaction uridine(34) in tRNA + AH2 + O2 = 5-hydroxyuridine(34) in tRNA + A + H2O. Its function is as follows. Catalyzes oxygen-dependent 5-hydroxyuridine (ho5U) modification at position 34 in tRNAs. The protein is tRNA uridine(34) hydroxylase of Onion yellows phytoplasma (strain OY-M).